We begin with the raw amino-acid sequence, 417 residues long: Multifunctional CCA protein (417 aa).

ATP-binding residues include Gly-8 and Arg-11. 2 residues coordinate CTP: Gly-8 and Arg-11. Asp-21 and Asp-23 together coordinate Mg(2+). The ATP site is built by Arg-91, Arg-137, and Arg-140. CTP is bound by residues Arg-91, Arg-137, and Arg-140. The HD domain maps to 225–326 (SGIHTLMTLQ…LNVLKKTDAF (102 aa)).

The protein belongs to the tRNA nucleotidyltransferase/poly(A) polymerase family. Bacterial CCA-adding enzyme type 1 subfamily. As to quaternary structure, monomer. Can also form homodimers and oligomers. The cofactor is Mg(2+). Ni(2+) is required as a cofactor.

The catalysed reaction is a tRNA precursor + 2 CTP + ATP = a tRNA with a 3' CCA end + 3 diphosphate. It carries out the reaction a tRNA with a 3' CCA end + 2 CTP + ATP = a tRNA with a 3' CCACCA end + 3 diphosphate. Functionally, catalyzes the addition and repair of the essential 3'-terminal CCA sequence in tRNAs without using a nucleic acid template. Adds these three nucleotides in the order of C, C, and A to the tRNA nucleotide-73, using CTP and ATP as substrates and producing inorganic pyrophosphate. tRNA 3'-terminal CCA addition is required both for tRNA processing and repair. Also involved in tRNA surveillance by mediating tandem CCA addition to generate a CCACCA at the 3' terminus of unstable tRNAs. While stable tRNAs receive only 3'-terminal CCA, unstable tRNAs are marked with CCACCA and rapidly degraded. The polypeptide is Multifunctional CCA protein (Neisseria meningitidis serogroup B (strain ATCC BAA-335 / MC58)).